Consider the following 432-residue polypeptide: Putative transposase A625R (432 aa).

Zn(2+) contacts are provided by Cys-375, Cys-378, Cys-393, and Cys-395.

This sequence in the N-terminal section; belongs to the transposase 2 family. In the C-terminal section; belongs to the transposase 35 family.

This is Putative transposase A625R from Chlorella (PBCV-1).